A 250-amino-acid polypeptide reads, in one-letter code: MVAGSDAGRALGVLSVVCLLHCFGFISCFSQQIYGVVYGNVTFHVPSNVPLKEVLWKKQKDKVAELENSEFRAFSSFKNRVYLDTVSGSLTIYNLTSSDEDEYEMESPNITDTMKFFLYVLESLPSPTLTCALTNGSIEVQCMIPEHYNSHRGLIMYSWDCPMEQCKRNSTSIYFKMENDLPQKIQCTLSNPLFNTTSSIILTTCIPSSGHSRHRYALIPIPLAVITTCIVLYMNGILKCDRKPDRTNSN.

Residues 1 to 28 (MVAGSDAGRALGVLSVVCLLHCFGFISC) form the signal peptide. Residues 29 to 215 (FSQQIYGVVY…IPSSGHSRHR (187 aa)) lie on the Extracellular side of the membrane. The 92-residue stretch at 30-121 (SQQIYGVVYG…DTMKFFLYVL (92 aa)) folds into the Ig-like domain. 6 N-linked (GlcNAc...) asparagine glycosylation sites follow: Asn40, Asn94, Asn109, Asn135, Asn169, and Asn195. The cysteines at positions 142 and 187 are disulfide-linked. The helical transmembrane segment at 216-238 (YALIPIPLAVITTCIVLYMNGIL) threads the bilayer. The Cytoplasmic portion of the chain corresponds to 239–250 (KCDRKPDRTNSN).

As to quaternary structure, interacts with CD2. Interacts with CMTM6. (Microbial infection) Interacts with human cytomegalovirus protein UL148; this interaction retains immature CD58 intracellularly.

It localises to the cell membrane. Its function is as follows. Ligand of the T-lymphocyte CD2 glycoprotein. This interaction is important in mediating thymocyte interactions with thymic epithelial cells, antigen-independent and -dependent interactions of T-lymphocytes with target cells and antigen-presenting cells and the T-lymphocyte rosetting with erythrocytes. In addition, the LFA-3/CD2 interaction may prime response by both the CD2+ and LFA-3+ cells. This Homo sapiens (Human) protein is Lymphocyte function-associated antigen 3 (CD58).